Consider the following 1080-residue polypeptide: uncharacterized protein (1080 aa).

A signal peptide spans 1–17 (MHKLLVIIAHIIVCAYA). Residues 18–1042 (DFTGFDNEAG…KSLDLEMIGK (1025 aa)) lie on the Extracellular side of the membrane. N-linked (GlcNAc...) asparagine; by host glycans are attached at residues asparagine 439, asparagine 664, and asparagine 875. The chain crosses the membrane as a helical span at residues 1043-1063 (IILLIAFVIVFVILLTIGIIT). Residues 1064-1080 (LVKRHRETLPEDEYLLP) lie on the Cytoplasmic side of the membrane.

The protein resides in the host membrane. This is an uncharacterized protein from Ostreid herpesvirus 1 (isolate France) (OsHV-1).